Consider the following 212-residue polypeptide: Uridine kinase (212 aa).

ATP is bound at residue glycine 13–threonine 20.

The protein belongs to the uridine kinase family.

Its subcellular location is the cytoplasm. It carries out the reaction uridine + ATP = UMP + ADP + H(+). It catalyses the reaction cytidine + ATP = CMP + ADP + H(+). It functions in the pathway pyrimidine metabolism; CTP biosynthesis via salvage pathway; CTP from cytidine: step 1/3. It participates in pyrimidine metabolism; UMP biosynthesis via salvage pathway; UMP from uridine: step 1/1. The sequence is that of Uridine kinase from Bacillus anthracis (strain A0248).